Here is a 120-residue protein sequence, read N- to C-terminus: uncharacterized protein (120 aa).

This sequence to M.jannaschii MJ0361.

This is an uncharacterized protein from Methanocaldococcus jannaschii (strain ATCC 43067 / DSM 2661 / JAL-1 / JCM 10045 / NBRC 100440) (Methanococcus jannaschii).